Reading from the N-terminus, the 85-residue chain is ATP synthase subunit c (85 aa).

Helical transmembrane passes span 10-30 (IAVAIIVGLCAVGTAIGFAVL) and 53-73 (FIIAGLLDAVPMIGIVIALLF).

Belongs to the ATPase C chain family. As to quaternary structure, F-type ATPases have 2 components, F(1) - the catalytic core - and F(0) - the membrane proton channel. F(1) has five subunits: alpha(3), beta(3), gamma(1), delta(1), epsilon(1). F(0) has three main subunits: a(1), b(2) and c(10-14). The alpha and beta chains form an alternating ring which encloses part of the gamma chain. F(1) is attached to F(0) by a central stalk formed by the gamma and epsilon chains, while a peripheral stalk is formed by the delta and b chains.

The protein resides in the cell inner membrane. Its function is as follows. F(1)F(0) ATP synthase produces ATP from ADP in the presence of a proton or sodium gradient. F-type ATPases consist of two structural domains, F(1) containing the extramembraneous catalytic core and F(0) containing the membrane proton channel, linked together by a central stalk and a peripheral stalk. During catalysis, ATP synthesis in the catalytic domain of F(1) is coupled via a rotary mechanism of the central stalk subunits to proton translocation. In terms of biological role, key component of the F(0) channel; it plays a direct role in translocation across the membrane. A homomeric c-ring of between 10-14 subunits forms the central stalk rotor element with the F(1) delta and epsilon subunits. The protein is ATP synthase subunit c of Vibrio cholerae serotype O1 (strain ATCC 39315 / El Tor Inaba N16961).